An 876-amino-acid polypeptide reads, in one-letter code: MSDDTVTPMMAQYLEIKAQHPGAILFYRMGDFYEMFFEDAALAAEALDIALTKRGKHKGEDIAMCGVPIHAAEGYLLTLIRKGFRVAIAEQMEDPAEAKKRGSKSVVRREVVRLVTPGTLTEDSLLEARRHNFLCAFAEIRDEAALAWADISTGEFSVTPCPLPRLLPELARLAPRELLVADERPLDWIEEVGCALTPLARASFDSASAEKRLCTLFGVGTLDSFGNFTRPELSAMGALVDYLDLTQRGKLPLLRPPVREVAGGTVQIDAATRRNLEITQALTGGREGSLLSAVDRTVTAPGARLLERRLSSPSRDLGLIHDRLAAVSWLTDEPRLREDLRASLRRVPDMDRALSRLALDRAGPRDMAAIRAGLTQAEAIAGRMPADAPSLLAETLEALRGHENLVDLLDQALVAEPPLLVRDGGFIAPGFDDDLDETRRLRDEGRGVIASMQAGFIETTGIQSLKIKHNNVLGYFIEVTSTHAEKMLSPPLSESFIHRQTTAGQVRFTTVALSELETRILNAGNRALELEKMHFAALRTAILDQAGAIGRAARALAEVDLIAAFADLAVAEDWTEPQVDDSRAFAIEAGRHPVVERALRRTGTPFVANDCDLSKAETPAVWLITGPNMAGKSTFLRQNALIALLAQAGSFVPARRAHIGLVSQIFSRVGASDDLARGRSTFMVEMVETAAILNQADDRALVILDEIGRGTATWDGLSIAWATLEHLHDTNRCRALFATHYHEMTALAGKLTGVENATVSVKEWQGEVIFLHEVRRGAADRSYGVQVARLAGLPASVIERARTVLDALESGERESGPRRQALIDDLPLFRAAPPPPAPAAPPKASQVEERLRAIQPDDLSPREALKLLYDLRALLP.

Gly-626–Ser-633 contributes to the ATP binding site. Positions Phe-829–Pro-856 are disordered. Positions Ala-832–Pro-841 are enriched in pro residues.

Belongs to the DNA mismatch repair MutS family.

Functionally, this protein is involved in the repair of mismatches in DNA. It is possible that it carries out the mismatch recognition step. This protein has a weak ATPase activity. The polypeptide is DNA mismatch repair protein MutS (Cereibacter sphaeroides (strain ATCC 17025 / ATH 2.4.3) (Rhodobacter sphaeroides)).